The sequence spans 408 residues: Peptidase T (408 aa).

Zn(2+) is bound at residue His-78. Asp-80 is an active-site residue. Asp-141 lines the Zn(2+) pocket. The active-site Proton acceptor is the Glu-175. Zn(2+) is bound by residues Glu-176, Asp-198, and His-380.

Belongs to the peptidase M20B family. Requires Zn(2+) as cofactor.

Its subcellular location is the cytoplasm. It catalyses the reaction Release of the N-terminal residue from a tripeptide.. Its function is as follows. Cleaves the N-terminal amino acid of tripeptides. This chain is Peptidase T, found in Clostridium botulinum (strain ATCC 19397 / Type A).